We begin with the raw amino-acid sequence, 182 residues long: Nudix hydrolase 17, mitochondrial (182 aa).

A mitochondrion-targeting transit peptide spans 1 to 26 (MGVEKMVCLASRTGRQFQRYNKGRRQ). The 132-residue stretch at 27 to 158 (VVGCVPYRFK…WMKEALDVLV (132 aa)) folds into the Nudix hydrolase domain. The Nudix box motif lies at 65-86 (GGWELDESVEEAASRECLEEAG). Residues Glu80 and Glu84 each contribute to the Mg(2+) site.

It belongs to the Nudix hydrolase family. The cofactor is Mg(2+). Mn(2+) serves as cofactor. Expressed in roots, leaves, stems and inflorescences.

It is found in the mitochondrion. Its function is as follows. Probably mediates the hydrolysis of some nucleoside diphosphate derivatives. The protein is Nudix hydrolase 17, mitochondrial (NUDT17) of Arabidopsis thaliana (Mouse-ear cress).